The chain runs to 309 residues: uncharacterized protein (309 aa).

Positions 1–60 (MKPLLDVLMILDALEKEGSFAAASAKLYKTPSALSYTVHKLESDLNIQLLDRSGHRAKFT) constitute an HTH lysR-type domain. A DNA-binding region (H-T-H motif) is located at residues 20–39 (FAAASAKLYKTPSALSYTVH).

It belongs to the LysR transcriptional regulatory family.

This is an uncharacterized protein from Escherichia coli (strain K12).